Reading from the N-terminus, the 404-residue chain is Methyltransferase-like protein 22 (404 aa).

2 disordered regions span residues 60 to 102 (TDSG…SLQA) and 115 to 145 (QLDE…DKVH). Basic and acidic residues predominate over residues 68-78 (SHRDVHTKEPP). Positions 79–88 (SAETGSTGSP) are enriched in low complexity. Serine 132 carries the phosphoserine modification.

Belongs to the methyltransferase superfamily. METTL22 family. In terms of assembly, interacts with members of the heat shock protein 90 and 70 families; these proteins probably are methylation substrates.

Its subcellular location is the nucleus. The enzyme catalyses L-lysyl-[protein] + 3 S-adenosyl-L-methionine = N(6),N(6),N(6)-trimethyl-L-lysyl-[protein] + 3 S-adenosyl-L-homocysteine + 3 H(+). Protein N-lysine methyltransferase. Trimethylates KIN at Lys-135 (in vitro). The chain is Methyltransferase-like protein 22 (METTL22) from Homo sapiens (Human).